The primary structure comprises 285 residues: NAD kinase (285 aa).

Catalysis depends on aspartate 66, which acts as the Proton acceptor. NAD(+)-binding positions include 66-67 (DG), 137-138 (ND), arginine 148, arginine 165, aspartate 167, and 178-183 (TAYSMS).

The protein belongs to the NAD kinase family. Requires a divalent metal cation as cofactor.

It is found in the cytoplasm. The catalysed reaction is NAD(+) + ATP = ADP + NADP(+) + H(+). Its function is as follows. Involved in the regulation of the intracellular balance of NAD and NADP, and is a key enzyme in the biosynthesis of NADP. Catalyzes specifically the phosphorylation on 2'-hydroxyl of the adenosine moiety of NAD to yield NADP. The polypeptide is NAD kinase (Chlorobium luteolum (strain DSM 273 / BCRC 81028 / 2530) (Pelodictyon luteolum)).